Here is a 311-residue protein sequence, read N- to C-terminus: GTP cyclohydrolase FolE2 (311 aa).

This sequence belongs to the GTP cyclohydrolase IV family.

The enzyme catalyses GTP + H2O = 7,8-dihydroneopterin 3'-triphosphate + formate + H(+). It participates in cofactor biosynthesis; 7,8-dihydroneopterin triphosphate biosynthesis; 7,8-dihydroneopterin triphosphate from GTP: step 1/1. Its function is as follows. Converts GTP to 7,8-dihydroneopterin triphosphate. This is GTP cyclohydrolase FolE2 from Xanthomonas campestris pv. campestris (strain 8004).